The sequence spans 96 residues: Co-chaperonin GroES (96 aa).

This sequence belongs to the GroES chaperonin family. As to quaternary structure, heptamer of 7 subunits arranged in a ring. Interacts with the chaperonin GroEL.

It localises to the cytoplasm. In terms of biological role, together with the chaperonin GroEL, plays an essential role in assisting protein folding. The GroEL-GroES system forms a nano-cage that allows encapsulation of the non-native substrate proteins and provides a physical environment optimized to promote and accelerate protein folding. GroES binds to the apical surface of the GroEL ring, thereby capping the opening of the GroEL channel. The sequence is that of Co-chaperonin GroES from Legionella micdadei (Tatlockia micdadei).